Here is a 101-residue protein sequence, read N- to C-terminus: Interleukin-8 (101 aa).

Positions 1-22 are cleaved as a signal peptide; it reads MTSKLAVALLAAFLLSAALCEG. Arginine 27 carries the post-translational modification Citrulline. Intrachain disulfides connect cysteine 34-cysteine 61 and cysteine 36-cysteine 77.

The protein belongs to the intercrine alpha (chemokine CxC) family. In terms of assembly, homodimer. Interacts with TNFAIP6 (via Link domain); this interaction interferes with chemokine binding to glycosaminoglycans. Citrullination at Arg-27 prevents proteolysis, and dampens tissue inflammation, it also enhances leukocytosis, possibly through impaired chemokine clearance from the blood circulation.

It localises to the secreted. Functionally, chemotactic factor that mediates inflammatory response by attracting neutrophils, basophils, and T-cells to clear pathogens and protect the host from infection. Also plays an important role in neutrophil activation. Released in response to an inflammatory stimulus, exerts its effect by binding to the G-protein-coupled receptors CXCR1 and CXCR2, primarily found in neutrophils, monocytes and endothelial cells. G-protein heterotrimer (alpha, beta, gamma subunits) constitutively binds to CXCR1/CXCR2 receptor and activation by IL8 leads to beta and gamma subunits release from Galpha (GNAI2 in neutrophils) and activation of several downstream signaling pathways including PI3K and MAPK pathways. The polypeptide is Interleukin-8 (CXCL8) (Macaca mulatta (Rhesus macaque)).